The sequence spans 604 residues: Elongation factor 4 (604 aa).

A tr-type G domain is found at Glu4–Lys186. Residues Asp16–Thr21 and Asn133–Asp136 each bind GTP.

Belongs to the TRAFAC class translation factor GTPase superfamily. Classic translation factor GTPase family. LepA subfamily.

Its subcellular location is the cell inner membrane. It catalyses the reaction GTP + H2O = GDP + phosphate + H(+). Functionally, required for accurate and efficient protein synthesis under certain stress conditions. May act as a fidelity factor of the translation reaction, by catalyzing a one-codon backward translocation of tRNAs on improperly translocated ribosomes. Back-translocation proceeds from a post-translocation (POST) complex to a pre-translocation (PRE) complex, thus giving elongation factor G a second chance to translocate the tRNAs correctly. Binds to ribosomes in a GTP-dependent manner. The polypeptide is Elongation factor 4 (Solibacter usitatus (strain Ellin6076)).